A 148-amino-acid chain; its full sequence is Large ribosomal subunit protein bL9 (148 aa).

The protein belongs to the bacterial ribosomal protein bL9 family.

Binds to the 23S rRNA. In Caldicellulosiruptor bescii (strain ATCC BAA-1888 / DSM 6725 / KCTC 15123 / Z-1320) (Anaerocellum thermophilum), this protein is Large ribosomal subunit protein bL9.